Consider the following 1178-residue polypeptide: Pyruvate carboxylase, mitochondrial (1178 aa).

Residues 1-20 (MLKFRTVHGGLRLLGIRRTS) constitute a mitochondrion transit peptide. 2 positions are modified to N6-acetyllysine: lysine 35 and lysine 39. One can recognise a Biotin carboxylation domain in the interval 36 to 486 (PIKKVMVANR…DTQFIDENPE (451 aa)). Lysine 79 carries the N6-acetyllysine; alternate modification. Residue lysine 79 is modified to N6-succinyllysine; alternate. N6-acetyllysine occurs at positions 148 and 152. ATP-binding residues include lysine 152 and glutamate 236. The 198-residue stretch at 156-353 (RAIAIAAGVP…LVHAQIHVAE (198 aa)) folds into the ATP-grasp domain. Lysine 241 is subject to N6-acetyllysine. Histidine 271 lines the ATP pocket. Lysine 297 and lysine 319 each carry N6-acetyllysine. Arginine 328 is a catalytic residue. Lysine 434 is modified (N6-acetyllysine). At lysine 442 the chain carries N6-succinyllysine. The Pyruvate carboxyltransferase domain occupies 563 to 832 (LLLMDTTFRD…DTEVPMERVF (270 aa)). 571-575 (RDAHQ) provides a ligand contact to substrate. Residue aspartate 572 coordinates Mn(2+). Lysine 589 carries the post-translational modification N6-acetyllysine. Arginine 644 provides a ligand contact to substrate. Residues lysine 661 and lysine 717 each carry the N6-acetyllysine modification. Mn(2+) is bound at residue lysine 741. Position 741 is an N6-carboxylysine (lysine 741). Lysine 748 is modified (N6-acetyllysine). Mn(2+) is bound by residues histidine 771 and histidine 773. Lysine 892 is modified (N6-acetyllysine). Threonine 908 is a substrate binding site. An N6-acetyllysine mark is found at lysine 969 and lysine 992. Residue threonine 1003 is modified to Phosphothreonine. N6-acetyllysine occurs at positions 1061, 1090, and 1124. Residues 1109–1178 (KGQIGAPMPG…EGDDLILEIE (70 aa)) form the Biotinyl-binding domain. An N6-biotinyllysine modification is found at lysine 1144.

In terms of assembly, homotetramer. Interacts (via the biotin carboxylation domain) with SIRT4. Requires biotin as cofactor. Mn(2+) serves as cofactor. Post-translationally, acetylation of Lys-748 might play a role in catalytic activity regulation.

It is found in the mitochondrion matrix. The enzyme catalyses hydrogencarbonate + pyruvate + ATP = oxaloacetate + ADP + phosphate + H(+). It functions in the pathway carbohydrate biosynthesis; gluconeogenesis. In terms of biological role, pyruvate carboxylase catalyzes a 2-step reaction, involving the ATP-dependent carboxylation of the covalently attached biotin in the first step and the transfer of the carboxyl group to pyruvate in the second. Catalyzes in a tissue specific manner, the initial reactions of glucose (liver, kidney) and lipid (adipose tissue, liver, brain) synthesis from pyruvate. This Homo sapiens (Human) protein is Pyruvate carboxylase, mitochondrial.